Reading from the N-terminus, the 40-residue chain is Putative NAD(P)-dependent glyceraldehyde-3-phosphate dehydrogenase PS5 (40 aa).

This Pinus strobus (Eastern white pine) protein is Putative NAD(P)-dependent glyceraldehyde-3-phosphate dehydrogenase PS5.